Reading from the N-terminus, the 700-residue chain is Elongation factor G (700 aa).

The tr-type G domain occupies 10–286; it reads NKVRNIGIMA…AVIDYLPNPL (277 aa). GTP-binding positions include 19 to 26, 83 to 87, and 137 to 140; these read AHIDAGKT, DTPGH, and NKMD.

This sequence belongs to the TRAFAC class translation factor GTPase superfamily. Classic translation factor GTPase family. EF-G/EF-2 subfamily.

The protein localises to the cytoplasm. Functionally, catalyzes the GTP-dependent ribosomal translocation step during translation elongation. During this step, the ribosome changes from the pre-translocational (PRE) to the post-translocational (POST) state as the newly formed A-site-bound peptidyl-tRNA and P-site-bound deacylated tRNA move to the P and E sites, respectively. Catalyzes the coordinated movement of the two tRNA molecules, the mRNA and conformational changes in the ribosome. The sequence is that of Elongation factor G from Rhodococcus erythropolis (strain PR4 / NBRC 100887).